A 231-amino-acid chain; its full sequence is RNA pyrophosphohydrolase (231 aa).

The 144-residue stretch at 6–149 (GFRPNVGIIL…KRDVYQLALT (144 aa)) folds into the Nudix hydrolase domain. Residues 38 to 59 (GGIKYGETPEQAMYRELHEEIG) carry the Nudix box motif. The disordered stretch occupies residues 168–200 (VHHGRHGSGQRYAQQPGQPPTLAQRRPLQPVTQ).

This sequence belongs to the Nudix hydrolase family. RppH subfamily. Requires a divalent metal cation as cofactor.

Accelerates the degradation of transcripts by removing pyrophosphate from the 5'-end of triphosphorylated RNA, leading to a more labile monophosphorylated state that can stimulate subsequent ribonuclease cleavage. The polypeptide is RNA pyrophosphohydrolase (Cupriavidus pinatubonensis (strain JMP 134 / LMG 1197) (Cupriavidus necator (strain JMP 134))).